Reading from the N-terminus, the 356-residue chain is MTDFIEQFGVWGGFGIAVLQILAFAVVLLISLAFLLLMDRKVWAAVQMRKGPNVVGAFGLLQSFADFFKFVFKEIVVPAGADRSLYLLAPLITLILAFVTWAVVPAAPGWVIADLNVGILYLFAMSSLGVYGIIIGGWASNSKYPFLGALRSAAQMVSYEVSIGFIIVTVLLFAGSMNLSEIIEMQGGGFWNWNVLSFHAWPMPMFLVMIPMAVIFFISALAETNRPPFDLPEAESELVAGYQVEYSSTPYLLFMVGEYLNIVLMCAMTAILFFGGWNDPFGLDVSGWPYLASHAWYFFWFAAKIVFFFFMFAMVKALVPRYRYDQLMRLGWKIFLPISLAAVALVGAAVVYGPQG.

9 helical membrane passes run 16 to 36, 52 to 72, 85 to 105, 117 to 137, 163 to 183, 201 to 221, 254 to 274, 295 to 315, and 334 to 354; these read IAVLQILAFAVVLLISLAFLL, PNVVGAFGLLQSFADFFKFVF, LYLLAPLITLILAFVTWAVVP, VGILYLFAMSSLGVYGIIIGG, IGFIIVTVLLFAGSMNLSEII, WPMPMFLVMIPMAVIFFISAL, FMVGEYLNIVLMCAMTAILFF, AWYFFWFAAKIVFFFFMFAMV, and IFLPISLAAVALVGAAVVYGP.

This sequence belongs to the complex I subunit 1 family. In terms of assembly, NDH-1 is composed of 14 different subunits. Subunits NuoA, H, J, K, L, M, N constitute the membrane sector of the complex.

The protein localises to the cell inner membrane. It catalyses the reaction a quinone + NADH + 5 H(+)(in) = a quinol + NAD(+) + 4 H(+)(out). In terms of biological role, NDH-1 shuttles electrons from NADH, via FMN and iron-sulfur (Fe-S) centers, to quinones in the respiratory chain. The immediate electron acceptor for the enzyme in this species is believed to be ubiquinone. Couples the redox reaction to proton translocation (for every two electrons transferred, four hydrogen ions are translocated across the cytoplasmic membrane), and thus conserves the redox energy in a proton gradient. This subunit may bind ubiquinone. The chain is NADH-quinone oxidoreductase subunit H from Maricaulis maris (strain MCS10) (Caulobacter maris).